A 383-amino-acid polypeptide reads, in one-letter code: Odorant receptor 94b (383 aa).

Over 1-41 (MESTNRLSAIQTLLVIQRWIGLLKWENEGEDGVLTWLKRIY) the chain is Cytoplasmic. Residues 42–62 (PFVLHLPLTFTYIALMWYEAI) form a helical membrane-spanning segment. At 63-70 (TSSDFEEA) the chain is on the extracellular side. A helical transmembrane segment spans residues 71-91 (GQVLYMSITELALVTKLLNIW). At 92 to 130 (YRRHEAASLIHELQHDPAFNLRNSEEIKFWQQNQRNFKR) the chain is on the cytoplasmic side. Residues 131 to 151 (IFYWYIWGSLFVAVMGYISVF) traverse the membrane as a helical segment. Over 152–174 (FQEDYELPFGYYVPFEWRTRERY) the chain is Extracellular. Residues 175–195 (FYAWGYNVVAMTLCCLSNILL) form a helical membrane-spanning segment. The Cytoplasmic portion of the chain corresponds to 196–250 (DTLGCYFMFHIASLFRLLGMRLEALKNAAEEKARPELRRIFQLHTKVRRLTRECE). The helical transmembrane segment at 251–271 (VLVSPYVLSQVVFSAFIICFS) threads the bilayer. The Extracellular segment spans residues 272 to 284 (AYRLVHMGFKQRP). The helical transmembrane segment at 285–305 (GLFVTTVQFVAVMIVQIFLPC) threads the bilayer. The Cytoplasmic portion of the chain corresponds to 306-358 (YYGNELTFHANALTNSVFGTNWLEYSVGTRKLLNCYMEFLKRPVKVRAGVFFE). Residues 359-379 (IGLPIFVKTINNAYSFFALLL) traverse the membrane as a helical segment. The Extracellular portion of the chain corresponds to 380–383 (KISK).

Belongs to the insect chemoreceptor superfamily. Heteromeric odorant receptor channel (TC 1.A.69) family. Or2a subfamily. Interacts with Orco. Complexes exist early in the endomembrane system in olfactory sensory neurons (OSNs), coupling these complexes to the conserved ciliary trafficking pathway.

It localises to the cell membrane. Functionally, odorant receptor which mediates acceptance or avoidance behavior, depending on its substrates. The odorant receptor repertoire encodes a large collection of odor stimuli that vary widely in identity, intensity, and duration. May form a complex with Orco to form odorant-sensing units, providing sensitive and prolonged odorant signaling and calcium permeability. The protein is Odorant receptor 94b (Or94b) of Drosophila melanogaster (Fruit fly).